The following is a 410-amino-acid chain: 2-oxoglutarate-dependent dioxygenase AOP3 (410 aa).

Positions 258–355 constitute a Fe2OG dioxygenase domain; that stretch reads GNASVGAKEA…RYAAALFSNP (98 aa). The Fe cation site is built by histidine 278, aspartate 280, and histidine 335. Arginine 346 contacts 2-oxoglutarate.

This sequence belongs to the iron/ascorbate-dependent oxidoreductase family. Fe(2+) serves as cofactor.

2-oxoglutarate-dependent dioxygenase involved in glucosinolates biosynthesis. Catalyzes the conversion of methylsulfinylalkyl glucosinolates to hydroxyalkyl glucosinolates. In Arabidopsis thaliana (Mouse-ear cress), this protein is 2-oxoglutarate-dependent dioxygenase AOP3 (AOP3).